A 328-amino-acid polypeptide reads, in one-letter code: Serine/threonine-protein phosphatase PP2A-2 catalytic subunit (328 aa).

The Mn(2+) site is built by D76, H78, D104, and N136. The active-site Proton donor is the H137. 2 residues coordinate Mn(2+): H186 and H260. At L328 the chain carries Leucine methyl ester.

Belongs to the PPP phosphatase family. PP-2A subfamily. Mn(2+) is required as a cofactor.

It catalyses the reaction O-phospho-L-seryl-[protein] + H2O = L-seryl-[protein] + phosphate. The enzyme catalyses O-phospho-L-threonyl-[protein] + H2O = L-threonyl-[protein] + phosphate. The sequence is that of Serine/threonine-protein phosphatase PP2A-2 catalytic subunit (PP2A-2) from Blumeria hordei (Barley powdery mildew).